A 295-amino-acid chain; its full sequence is ER-localized J domain-containing protein 5 (295 aa).

Positions 1–20 are cleaved as a signal peptide; it reads MNGYWKPALVVLGLVSLSYA. Residues 21–130 lie on the Lumenal side of the membrane; that stretch reads FTTIETEIFQ…GFYFSRMKPK (110 aa). The J domain maps to 42–110; the sequence is DMNFYKFLKL…RKIYDYYLQN (69 aa). Residues 131-151 form a helical membrane-spanning segment; sequence TWFLLAFIWIVVNIGQYIISI. Over 152–295 the chain is Cytoplasmic; that stretch reads IQYRSQRSRI…PNGKVIYSRK (144 aa). Residues 259-287 form a disordered region; the sequence is KYDGNQTKKGNKVKKGSAKKGQKKMELPN. Basic residues predominate over residues 267–280; sequence KGNKVKKGSAKKGQ.

This sequence belongs to the DnaJ family.

Its subcellular location is the endoplasmic reticulum membrane. Functionally, dnaJ-like chaperone required for the folding capacity of the endoplasmic reticulum. The sequence is that of ER-localized J domain-containing protein 5 (ERJ5) from Saccharomyces cerevisiae (strain ATCC 204508 / S288c) (Baker's yeast).